Consider the following 232-residue polypeptide: Uracil phosphoribosyltransferase (232 aa).

38–42 serves as a coordination point for GTP; the sequence is KGLVR. Residues R87, R112, and 140–148 contribute to the 5-phospho-alpha-D-ribose 1-diphosphate site; that span reads DPMIATGST. Uracil is bound by residues I204 and 209 to 211; that span reads GDA. D210 provides a ligand contact to 5-phospho-alpha-D-ribose 1-diphosphate.

It belongs to the UPRTase family. Mg(2+) is required as a cofactor.

It catalyses the reaction UMP + diphosphate = 5-phospho-alpha-D-ribose 1-diphosphate + uracil. Its pathway is pyrimidine metabolism; UMP biosynthesis via salvage pathway; UMP from uracil: step 1/1. Its activity is regulated as follows. Allosterically activated by GTP. In terms of biological role, catalyzes the conversion of uracil and 5-phospho-alpha-D-ribose 1-diphosphate (PRPP) to UMP and diphosphate. The sequence is that of Uracil phosphoribosyltransferase from Methanococcus vannielii (strain ATCC 35089 / DSM 1224 / JCM 13029 / OCM 148 / SB).